The sequence spans 412 residues: Multifunctional CCA protein (412 aa).

ATP-binding residues include Gly-8 and Arg-11. Residues Gly-8 and Arg-11 each contribute to the CTP site. Mg(2+) contacts are provided by Asp-21 and Asp-23. Residues Arg-91, Arg-137, and Arg-140 each coordinate ATP. 3 residues coordinate CTP: Arg-91, Arg-137, and Arg-140. Residues 226-327 (TGEHVLMVVE…VKVLERCDAL (102 aa)) form the HD domain.

This sequence belongs to the tRNA nucleotidyltransferase/poly(A) polymerase family. Bacterial CCA-adding enzyme type 1 subfamily. As to quaternary structure, monomer. Can also form homodimers and oligomers. Mg(2+) serves as cofactor. The cofactor is Ni(2+).

The enzyme catalyses a tRNA precursor + 2 CTP + ATP = a tRNA with a 3' CCA end + 3 diphosphate. It carries out the reaction a tRNA with a 3' CCA end + 2 CTP + ATP = a tRNA with a 3' CCACCA end + 3 diphosphate. Catalyzes the addition and repair of the essential 3'-terminal CCA sequence in tRNAs without using a nucleic acid template. Adds these three nucleotides in the order of C, C, and A to the tRNA nucleotide-73, using CTP and ATP as substrates and producing inorganic pyrophosphate. tRNA 3'-terminal CCA addition is required both for tRNA processing and repair. Also involved in tRNA surveillance by mediating tandem CCA addition to generate a CCACCA at the 3' terminus of unstable tRNAs. While stable tRNAs receive only 3'-terminal CCA, unstable tRNAs are marked with CCACCA and rapidly degraded. In Azoarcus sp. (strain BH72), this protein is Multifunctional CCA protein.